The primary structure comprises 224 residues: Urease accessory protein UreF (224 aa).

The protein belongs to the UreF family. UreD, UreF and UreG form a complex that acts as a GTP-hydrolysis-dependent molecular chaperone, activating the urease apoprotein by helping to assemble the nickel containing metallocenter of UreC. The UreE protein probably delivers the nickel.

It localises to the cytoplasm. Required for maturation of urease via the functional incorporation of the urease nickel metallocenter. The chain is Urease accessory protein UreF from Klebsiella pneumoniae (strain 342).